The sequence spans 249 residues: Serine acetyltransferase (249 aa).

It belongs to the transferase hexapeptide repeat family.

Its subcellular location is the cytoplasm. The catalysed reaction is L-serine + acetyl-CoA = O-acetyl-L-serine + CoA. Its pathway is amino-acid biosynthesis; L-cysteine biosynthesis; L-cysteine from L-serine: step 1/2. The chain is Serine acetyltransferase (cysE) from Synechocystis sp. (strain ATCC 27184 / PCC 6803 / Kazusa).